Reading from the N-terminus, the 257-residue chain is MAANFWTSSHCKQLLDQEDVDKVPQADSDRGITLEEFRLVKIHMSFHIWRLAQQVKVRQRVIATAVTYFRRVYTRKSMTEYDPRLVAPTCLYLASKVEESTVQARLLVFYIKKMCASDEKYRFEIKDILEMEMKLLEALDYYLVVYHPYRPLLQLLQDAGITDLTQFAWGIVNDTYKMDLILIHPPYMIALACIYIASVLKDKDITLWFEELRVDMNIVKNISMEILDFYDTYKIDPQRGLPEDKIAPVMNKLPSKA.

It belongs to the cyclin family. Cyclin C subfamily.

The polypeptide is Cyclin-C1-1 (Oryza sativa subsp. japonica (Rice)).